Consider the following 289-residue polypeptide: Probable branched-chain-amino-acid aminotransferase (289 aa).

Position 154 is an N6-(pyridoxal phosphate)lysine (Lys-154).

This sequence belongs to the class-IV pyridoxal-phosphate-dependent aminotransferase family. The cofactor is pyridoxal 5'-phosphate.

The catalysed reaction is L-leucine + 2-oxoglutarate = 4-methyl-2-oxopentanoate + L-glutamate. It catalyses the reaction L-isoleucine + 2-oxoglutarate = (S)-3-methyl-2-oxopentanoate + L-glutamate. The enzyme catalyses L-valine + 2-oxoglutarate = 3-methyl-2-oxobutanoate + L-glutamate. It functions in the pathway amino-acid biosynthesis; L-isoleucine biosynthesis; L-isoleucine from 2-oxobutanoate: step 4/4. It participates in amino-acid biosynthesis; L-leucine biosynthesis; L-leucine from 3-methyl-2-oxobutanoate: step 4/4. Its pathway is amino-acid biosynthesis; L-valine biosynthesis; L-valine from pyruvate: step 4/4. In terms of biological role, acts on leucine, isoleucine and valine. The chain is Probable branched-chain-amino-acid aminotransferase (ilvE) from Rickettsia bellii (strain RML369-C).